The sequence spans 492 residues: La-related protein 6 (492 aa).

Positions 1–87 (MAQLGEQTLP…REDLEPEWRP (87 aa)) are disordered. Ala-2 carries the post-translational modification N-acetylalanine. Residues 24-37 (EAEDLEDLEEEDEG) are compositionally biased toward acidic residues. A phosphoserine mark is found at Ser-56 and Ser-58. A compositionally biased stretch (polar residues) spans 65–74 (GHSSATTSGG). Residues 86–177 (RPPDEELIRK…RRTTPVPLFP (92 aa)) form the HTH La-type RNA-binding domain. Positions 184–296 (KMLLVYDLHL…KAVLIGMKPP (113 aa)) constitute an RRM domain. The Nuclear export signal motif lies at 186–193 (LLVYDLHL). 2 disordered regions span residues 292–398 (GMKP…KSPL) and 466–492 (VGVL…RACV). Positions 296–302 (PKKKPLK) match the Nuclear localization signal motif. The span at 332–346 (DESSANSSSDPESNP) shows a compositional bias: low complexity. Positions 359–386 (NKLSPSGHQNIFLSPNASPCSSPWSSPL) are enriched in polar residues. The region spanning 427–485 (PSGSPWVRRRRQAEMGTQEKSPGASPLLSRRMQTADGLPVGVLRLPRGPDNTRGFHGGH) is the SUZ-C domain. Residues 483–492 (GGHERGRACV) show a composition bias toward basic and acidic residues.

In terms of assembly, interacts (via the HTH domain) with VIM/vimentin. Interacts (via C-terminus) with non-muscle myosin MYH10. Interacts (via C-terminus) with DHX9. Expressed in numerous tissues. Highest expression in heart and brain, intermediate in kidney, skeletal muscle and testis, lowest expression in testis (at protein level).

It localises to the cytoplasm. The protein localises to the nucleus. In terms of biological role, regulates the coordinated translation of type I collagen alpha-1 and alpha-2 mRNAs, CO1A1 and CO1A2. Stabilizes mRNAs through high-affinity binding of a stem-loop structure in their 5' UTR. This regulation requires VIM and MYH10 filaments, and the helicase DHX9. The sequence is that of La-related protein 6 (Larp6) from Mus musculus (Mouse).